Reading from the N-terminus, the 209-residue chain is Small ribosomal subunit protein uS4 (209 aa).

Residues 23 to 46 (SRNPLLKKPHPPGQHGMQRKKKSD) form a disordered region. One can recognise an S4 RNA-binding domain in the interval 93–153 (CRLDNMVYRM…EKSKRLQSVK (61 aa)).

It belongs to the universal ribosomal protein uS4 family. In terms of assembly, part of the 30S ribosomal subunit. Contacts protein S5. The interaction surface between S4 and S5 is involved in control of translational fidelity.

Its function is as follows. One of the primary rRNA binding proteins, it binds directly to 16S rRNA where it nucleates assembly of the body of the 30S subunit. Functionally, with S5 and S12 plays an important role in translational accuracy. This Chlamydia pneumoniae (Chlamydophila pneumoniae) protein is Small ribosomal subunit protein uS4.